A 423-amino-acid chain; its full sequence is Gamma-glutamyl phosphate reductase (423 aa).

Belongs to the gamma-glutamyl phosphate reductase family.

The protein resides in the cytoplasm. It catalyses the reaction L-glutamate 5-semialdehyde + phosphate + NADP(+) = L-glutamyl 5-phosphate + NADPH + H(+). The protein operates within amino-acid biosynthesis; L-proline biosynthesis; L-glutamate 5-semialdehyde from L-glutamate: step 2/2. Its function is as follows. Catalyzes the NADPH-dependent reduction of L-glutamate 5-phosphate into L-glutamate 5-semialdehyde and phosphate. The product spontaneously undergoes cyclization to form 1-pyrroline-5-carboxylate. The sequence is that of Gamma-glutamyl phosphate reductase from Burkholderia orbicola (strain AU 1054).